Reading from the N-terminus, the 188-residue chain is Fructose-1-phosphate phosphatase YqaB (188 aa).

D11 serves as the catalytic Nucleophile. The Mg(2+) site is built by D11, D13, and D167. 11 to 13 (DMD) provides a ligand contact to substrate.

The protein belongs to the HAD-like hydrolase superfamily. CbbY/CbbZ/Gph/YieH family. Mg(2+) is required as a cofactor. The cofactor is Mn(2+). It depends on Co(2+) as a cofactor. Zn(2+) serves as cofactor.

In terms of biological role, catalyzes strongly the dephosphorylation of fructose-1-phosphate (Fru1P) and slightly the dephosphorylation of 6-phosphogluconate (6P-Glu). It has low beta-phosphoglucomutase activity. The chain is Fructose-1-phosphate phosphatase YqaB (yqaB) from Escherichia coli (strain K12).